A 553-amino-acid chain; its full sequence is Thioredoxin domain-containing protein 2 (553 aa).

Disordered stretches follow at residues 1–37 (MDVD…DANE) and 77–442 (TEES…EETM). Residues 99–143 (PKQDDSPKSSEETIQPKEGDIPKAPEETIQSKKEDLPKSSEKAIQ) are compositionally biased toward basic and acidic residues. 22 repeat units span residues 113 to 127 (QPKE…EETI), 128 to 142 (QSKK…EKAI), 143 to 157 (QPKE…AKPI), 158 to 172 (QPKL…VKPS), 173 to 187 (QPKE…EETI), 188 to 202 (QSKK…EEAI), 203 to 217 (QPKE…AKPI), 218 to 232 (QPKL…VKPS), 233 to 247 (QPKE…EETI), 248 to 262 (QPKE…AKPI), 263 to 277 (QPKL…VKPS), 278 to 292 (QPKE…EEAI), 293 to 307 (QPKE…EEAI), 308 to 322 (QPKE…EEAI), 323 to 337 (QPKE…EEAI), 338 to 352 (QPKE…EETI), 353 to 367 (QPKK…EEAI), 368 to 382 (QPKE…KQAI), 383 to 397 (QPKE…EEAI), 398 to 412 (PPKE…EETI), 413 to 427 (QPKE…EEAT), and 428 to 442 (PSKE…EETM). A 22 X 15 AA approximate tandem repeat of Q-P-K-X-G-D-I-P-K-S-[PS]-E-[KE]-X-I region spans residues 113–442 (QPKEGDIPKA…DILKPEEETM (330 aa)). Basic and acidic residues predominate over residues 173–209 (QPKEGDIPKAPEETIQSKKEDLPKSSEEAIQPKEGDI). Residues 233–254 (QPKESDIPKSPEETIQPKEGDI) show a composition bias toward basic and acidic residues. 2 stretches are compositionally biased toward basic and acidic residues: residues 278–376 (QPKE…DIPK) and 385–439 (KEGD…KPEE). Phosphoserine is present on Ser362. Phosphoserine is present on Ser392. The 125-residue stretch at 429 to 553 (SKEGDILKPE…KLEAVIAELK (125 aa)) folds into the Thioredoxin domain. A disulfide bond links Cys480 and Cys483.

In terms of tissue distribution, testis-specific. Only expressed during spermiogenesis, prominently in round and elongating spermatids.

It is found in the cytoplasm. Probably plays a regulatory role in sperm development. May participate in regulation of fibrous sheath (FS) assembly by supporting the formation of disulfide bonds during sperm tail morphogenesis. May also be required to rectify incorrect disulfide pairing and generate suitable pairs between the FS constituents. Can reduce disulfide bonds in vitro in the presence of NADP and thioredoxin reductase. This is Thioredoxin domain-containing protein 2 (TXNDC2) from Homo sapiens (Human).